The primary structure comprises 103 residues: uncharacterized protein (103 aa).

Residues A12–S88 form the EthD domain.

This is an uncharacterized protein from Rhodococcus erythropolis (Arthrobacter picolinophilus).